Consider the following 2641-residue polypeptide: Inverse autotransporter adhesin YeeJ (2641 aa).

The signal sequence occupies residues 1 to 26 (MGIKLRRLTAGICLVTQLAFPMAAAA). The region spanning 50–98 (VPYILGALESAQSVAERFGISVAELRKLNQFRTFARGFDNVRQGDELDV) is the LysM domain. The interval 99-118 (PAQVSEKKLTPPPGNSSDNL) is disordered. Residues 125-400 (TSQQIGSLLA…SRYDLVDRNN (276 aa)) form an inverse autotransporter region. An invasin 3 domain region spans residues 513 to 605 (QKDSSVSLST…GVDAAKAPAV (93 aa)). Big-1 domains lie at 617–711 (HSSI…AGFI), 721–815 (IATL…VSFV), 822–913 (QVDL…VNFI), 920–1017 (ALTL…MTFV), 1024–1116 (VVVL…VNIA), 1123–1220 (QVTL…VTFV), 1227–1319 (VVVL…VNIA), 1326–1423 (QVTL…VTFV), 1430–1523 (QVVL…VHFI), 1531–1633 (IIEL…SINV), 1641–1734 (HLTL…VTYV), 1741–1837 (EISL…VNFT), 1844–1941 (QVNL…VTLI), 1948–2032 (KLTS…PTEV), 2048–2139 (FTSL…LEAI), 2142–2236 (KLTL…VKVT), and 2244–2336 (VASF…ITLV). The interval 2538 to 2641 (KSWWVNAGDA…FAHATCYKNL (104 aa)) is C-type lectin domain.

This sequence belongs to the intimin/invasin family.

Its subcellular location is the cell outer membrane. A probable inverse autotransporter, it may be involved in biofilm formation and cell adhesion. May bind peptidoglycan via its LysM domain. Upon overexpression shows increased mature biofilm formation. The polypeptide is Inverse autotransporter adhesin YeeJ (Escherichia coli O17:K52:H18 (strain UMN026 / ExPEC)).